The sequence spans 295 residues: Chromatin modification-related protein YNG2 (295 aa).

A disordered region spans residues 151–208 (NGTAGSGSSSGRKRPASSSSANGKGQKRKQQKKERSRSHQRAGTVSRDVSPNAGIGRD). The segment covering 156-171 (SGSSSGRKRPASSSSA) has biased composition (low complexity). Positions 175-190 (GQKRKQQKKERSRSHQ) are enriched in basic residues. A PHD-type zinc finger spans residues 233 to 282 (QLYCFCQRVSYGEMVACDGPNCKYEWFHYSCVNLTEPPKGQWYCPECRLE). 8 residues coordinate Zn(2+): Cys236, Cys238, Cys249, Cys254, His260, Cys263, Cys276, and Cys279.

It belongs to the ING family. In terms of assembly, interacts with H3K4me3 and to a lesser extent with H3K4me2. Component of the NuA4 histone acetyltransferase complex.

The protein localises to the nucleus. Component of the NuA4 histone acetyltransferase complex which is involved in transcriptional activation of selected genes principally by acetylation of nucleosomal histone H4 and H2A. The NuA4 complex is also involved in DNA repair. Involved in cell cycle progression and meiosis. The chain is Chromatin modification-related protein YNG2 (YNG2) from Kluyveromyces lactis (strain ATCC 8585 / CBS 2359 / DSM 70799 / NBRC 1267 / NRRL Y-1140 / WM37) (Yeast).